Reading from the N-terminus, the 290-residue chain is uncharacterized protein (290 aa).

The ABC transporter domain occupies 2–238 (LKTENLSVGY…EIVNELYDLK (237 aa)). Residue 34–41 (GPNGAGKS) coordinates ATP.

It belongs to the ABC transporter superfamily.

This is an uncharacterized protein from Methanocaldococcus jannaschii (strain ATCC 43067 / DSM 2661 / JAL-1 / JCM 10045 / NBRC 100440) (Methanococcus jannaschii).